A 614-amino-acid chain; its full sequence is Vitamin B12 transporter BtuB (614 aa).

The first 20 residues, 1-20 (MIKKASLLTACSVTAFSAWA), serve as a signal peptide directing secretion. The short motif at 26–33 (DTLVVTAN) is the TonB box element. The 115-residue stretch at 38-152 (PRSTVLAPTT…IGGVVNIITT (115 aa)) folds into the TBDR plug domain. Cyanocob(III)alamin-binding positions include Leu-83, Ser-85, Asn-92, and 110–111 (VS). In terms of domain architecture, TBDR beta-barrel spans 155 to 614 (HPGTEISAGW…EYTLXGSYTF (460 aa)). A run of 3 beta stranded transmembrane segments spans residues 158 to 165 (TEISAGWG), 169 to 178 (YQNYDVSTQQ), and 184 to 195 (TRVTLLGDYAHT). Ca(2+) is bound by residues Asp-199, Gln-211, Asp-213, and Asp-215. A run of 2 beta stranded transmembrane segments spans residues 217 to 227 (FLSKTLYGALE) and 232 to 248 (DAWS…NRTN). Positions 249 and 250 each coordinate Ca(2+). A cyanocob(III)alamin-binding site is contributed by Ala-251. Position 261 (Asp-261) interacts with Ca(2+). The next 14 membrane-spanning stretches (beta stranded) occupy residues 263 to 277 (RKLY…LRYN), 279 to 296 (ELIK…KDYN), 309 to 325 (TLDE…NNII), 328 to 337 (HGNIGAGVDW), 353 to 369 (YDQR…QQVG), 371 to 381 (FTFEGAGRSDD), 385 to 400 (FGRH…WEFI), 403 to 417 (YRFI…KAPN), 434 to 443 (KSKQWEGAFE), 449 to 458 (VNWRISGYRN), 473 to 490 (YYNE…TANF), 494 to 509 (PLTH…ARNA), 517 to 529 (RRAK…QLDW), and 535 to 550 (DWGI…YDKD). A cyanocob(III)alamin-binding site is contributed by Thr-309. Arg-517 lines the cyanocob(III)alamin pocket. Tyr-551 lines the cyanocob(III)alamin pocket. The next 3 membrane-spanning stretches (beta stranded) occupy residues 558-572 (TVKM…LAVA), 585-596 (IANLFDKDYETV), and 602-614 (AGRE…SYTF). A TonB C-terminal box motif is present at residues 597-614 (YGYQTAGREYTLXGSYTF).

The protein belongs to the TonB-dependent receptor family. BtuB (TC 1.B.14.3.1) subfamily.

It is found in the cell outer membrane. Functionally, involved in the active translocation of vitamin B12 (cyanocobalamin) across the outer membrane to the periplasmic space. It derives its energy for transport by interacting with the trans-periplasmic membrane protein TonB. The polypeptide is Vitamin B12 transporter BtuB (Escherichia coli O6:H1 (strain CFT073 / ATCC 700928 / UPEC)).